The following is a 225-amino-acid chain: Alpha-tubulin N-acetyltransferase 1 (225 aa).

The region spanning methionine 1–phenylalanine 190 is the N-acetyltransferase domain. Residue lysine 56 is modified to N6-acetyllysine; by autocatalysis. An acetyl-CoA-binding site is contributed by phenylalanine 124 to arginine 137. Lysine 146 bears the N6-acetyllysine; by autocatalysis mark. Residue serine 160 to lysine 169 coordinates acetyl-CoA. Positions proline 195–tryptophan 225 are disordered. Positions lysine 203–serine 219 are enriched in basic and acidic residues. Lysine 210 carries the N6-acetyllysine; by autocatalysis modification.

The protein belongs to the acetyltransferase ATAT1 family. As to quaternary structure, component of the BBSome complex. Interacts with AP2 alpha-adaptins, including AP2A2, but not with AP1 gamma-adaptin (AP1G1/AP1G2); this interaction is required for efficient alpha-tubulin acetylation, hence clathrin-coated pits are sites of microtubule acetylation. Autoacetylation strongly increases tubulin acetylation.

The protein resides in the cytoplasm. The protein localises to the membrane. Its subcellular location is the clathrin-coated pit. It localises to the cell junction. It is found in the focal adhesion. The protein resides in the cell projection. The protein localises to the axon. Its subcellular location is the cytoskeleton. It localises to the spindle. It carries out the reaction L-lysyl-[alpha-tubulin] + acetyl-CoA = N(6)-acetyl-L-lysyl-[alpha-tubulin] + CoA + H(+). Its function is as follows. Specifically acetylates 'Lys-40' in alpha-tubulin on the lumenal side of microtubules. Promotes microtubule destabilization and accelerates microtubule dynamics; this activity may be independent of acetylation activity. Acetylates alpha-tubulin with a slow enzymatic rate, due to a catalytic site that is not optimized for acetyl transfer. Enters the microtubule through each end and diffuses quickly throughout the lumen of microtubules. Acetylates only long/old microtubules because of its slow acetylation rate since it does not have time to act on dynamically unstable microtubules before the enzyme is released. Required for normal sperm flagellar function. Promotes directional cell locomotion and chemotaxis, through AP2A2-dependent acetylation of alpha-tubulin at clathrin-coated pits that are concentrated at the leading edge of migrating cells. May facilitate primary cilium assembly. This chain is Alpha-tubulin N-acetyltransferase 1, found in Bos taurus (Bovine).